The following is a 393-amino-acid chain: Elongation factor Tu (393 aa).

Residues K10–V203 form the tr-type G domain. The G1 stretch occupies residues G19–T26. G19 to T26 provides a ligand contact to GTP. T26 is a binding site for Mg(2+). Residues G60–S64 are G2. The interval D81–G84 is G3. GTP contacts are provided by residues D81 to H85 and N136 to D139. The G4 stretch occupies residues N136–D139. The G5 stretch occupies residues S173–L175.

The protein belongs to the TRAFAC class translation factor GTPase superfamily. Classic translation factor GTPase family. EF-Tu/EF-1A subfamily. In terms of assembly, monomer.

Its subcellular location is the cytoplasm. The catalysed reaction is GTP + H2O = GDP + phosphate + H(+). In terms of biological role, GTP hydrolase that promotes the GTP-dependent binding of aminoacyl-tRNA to the A-site of ribosomes during protein biosynthesis. This chain is Elongation factor Tu, found in Chlorobium limicola (strain DSM 245 / NBRC 103803 / 6330).